A 253-amino-acid chain; its full sequence is Imidazole glycerol phosphate synthase subunit HisF (253 aa).

Active-site residues include aspartate 11 and aspartate 130.

The protein belongs to the HisA/HisF family. Heterodimer of HisH and HisF.

The protein localises to the cytoplasm. The enzyme catalyses 5-[(5-phospho-1-deoxy-D-ribulos-1-ylimino)methylamino]-1-(5-phospho-beta-D-ribosyl)imidazole-4-carboxamide + L-glutamine = D-erythro-1-(imidazol-4-yl)glycerol 3-phosphate + 5-amino-1-(5-phospho-beta-D-ribosyl)imidazole-4-carboxamide + L-glutamate + H(+). It participates in amino-acid biosynthesis; L-histidine biosynthesis; L-histidine from 5-phospho-alpha-D-ribose 1-diphosphate: step 5/9. In terms of biological role, IGPS catalyzes the conversion of PRFAR and glutamine to IGP, AICAR and glutamate. The HisF subunit catalyzes the cyclization activity that produces IGP and AICAR from PRFAR using the ammonia provided by the HisH subunit. The sequence is that of Imidazole glycerol phosphate synthase subunit HisF from Paracoccus denitrificans (strain Pd 1222).